Consider the following 136-residue polypeptide: MLQPKRMKFRKMHKGRNRGYAAGDSVSFGTFGLKSVGRGRMTARQIEAARRAMTRAVKRQGKIWIRVFPDKPITEKPLEVRQGKGKGNVEYWVCQIQPGRVLYEMEGVPESVAREAFELAASKLPFKTTFVTRTVM.

The protein belongs to the universal ribosomal protein uL16 family. Part of the 50S ribosomal subunit.

In terms of biological role, binds 23S rRNA and is also seen to make contacts with the A and possibly P site tRNAs. The sequence is that of Large ribosomal subunit protein uL16 from Pseudoalteromonas atlantica (strain T6c / ATCC BAA-1087).